The primary structure comprises 427 residues: Queuine tRNA-ribosyltransferase catalytic subunit (427 aa).

D99 acts as the Proton acceptor in catalysis. Residues 99–103 (DSGGF), D153, Q196, and G223 contribute to the substrate site. Residues 254–260 (GVGFAAD) form an RNA binding region. The active-site Nucleophile is D273. Residues 278–282 (TRTAR) are RNA binding; important for wobble base 34 recognition. Residues C311, C313, C316, and H341 each contribute to the Zn(2+) site. The segment at 395–427 (PADPERIDEQDQKPKTEKRRETEDVAEEQVASS) is disordered. Positions 397–417 (DPERIDEQDQKPKTEKRRETE) are enriched in basic and acidic residues.

The protein belongs to the queuine tRNA-ribosyltransferase family. Heterodimer of a catalytic subunit and an accessory subunit. Zn(2+) serves as cofactor.

Its subcellular location is the cytoplasm. It carries out the reaction guanosine(34) in tRNA + queuine = queuosine(34) in tRNA + guanine. In terms of biological role, catalytic subunit of the queuine tRNA-ribosyltransferase (TGT) that catalyzes the base-exchange of a guanine (G) residue with queuine (Q) at position 34 (anticodon wobble position) in tRNAs with GU(N) anticodons (tRNA-Asp, -Asn, -His and -Tyr), resulting in the hypermodified nucleoside queuosine (7-(((4,5-cis-dihydroxy-2-cyclopenten-1-yl)amino)methyl)-7-deazaguanosine). Catalysis occurs through a double-displacement mechanism. The nucleophile active site attacks the C1' of nucleotide 34 to detach the guanine base from the RNA, forming a covalent enzyme-RNA intermediate. The proton acceptor active site deprotonates the incoming queuine, allowing a nucleophilic attack on the C1' of the ribose to form the product. The chain is Queuine tRNA-ribosyltransferase catalytic subunit (Tgt) from Drosophila melanogaster (Fruit fly).